A 120-amino-acid polypeptide reads, in one-letter code: NAD(P)H-quinone oxidoreductase subunit 3, chloroplastic (120 aa).

The next 3 helical transmembrane spans lie at I9–G29, M64–M84, and V88–S108.

Belongs to the complex I subunit 3 family. NDH is composed of at least 16 different subunits, 5 of which are encoded in the nucleus.

It localises to the plastid. It is found in the chloroplast thylakoid membrane. The enzyme catalyses a plastoquinone + NADH + (n+1) H(+)(in) = a plastoquinol + NAD(+) + n H(+)(out). It catalyses the reaction a plastoquinone + NADPH + (n+1) H(+)(in) = a plastoquinol + NADP(+) + n H(+)(out). Functionally, NDH shuttles electrons from NAD(P)H:plastoquinone, via FMN and iron-sulfur (Fe-S) centers, to quinones in the photosynthetic chain and possibly in a chloroplast respiratory chain. The immediate electron acceptor for the enzyme in this species is believed to be plastoquinone. Couples the redox reaction to proton translocation, and thus conserves the redox energy in a proton gradient. In Amborella trichopoda, this protein is NAD(P)H-quinone oxidoreductase subunit 3, chloroplastic.